The following is a 105-amino-acid chain: UPF0145 protein Ping_0381 (105 aa).

Belongs to the UPF0145 family.

The polypeptide is UPF0145 protein Ping_0381 (Psychromonas ingrahamii (strain DSM 17664 / CCUG 51855 / 37)).